The primary structure comprises 399 residues: Na(+)/H(+) antiporter NhaA (399 aa).

A run of 11 helical transmembrane segments spans residues 14–34, 59–79, 95–115, 124–144, 154–174, 177–197, 213–233, 261–281, 290–310, 331–351, and 363–383; these read AGGILLMIAVALAMIMANSPL, LIHWINDGLMALFFMLIGLEV, SLPTFAAVGGMVFPAGIYLLF, AGWAIPAATDIAFALGVMALL, VFLLALAIIDDLGVVVIIAMF, TDLSMLSLIVAGIAILGLVGL, LILWIAVLKSGVHATLAGVII, FIILPIFAFANAGVDLSPMSF, VGIALGLLLGKPLGVLVFSYI, VALMCGIGFTMSMFISSLAFV, and LGILVGSFASAIIGYFWLAKV.

This sequence belongs to the NhaA Na(+)/H(+) (TC 2.A.33) antiporter family.

Its subcellular location is the cell inner membrane. The catalysed reaction is Na(+)(in) + 2 H(+)(out) = Na(+)(out) + 2 H(+)(in). In terms of biological role, na(+)/H(+) antiporter that extrudes sodium in exchange for external protons. The chain is Na(+)/H(+) antiporter NhaA from Shewanella sediminis (strain HAW-EB3).